The sequence spans 450 residues: LanC-like protein 2 (450 aa).

G2 is lipidated: N-myristoyl glycine. Positions 2–14 (GETMSKRLKFHLG) are interaction with inositol phospholipids. Position 198 is a phosphotyrosine (Y198).

Belongs to the LanC-like protein family. Interacts with an array of inositol phospholipids such as phosphatidylinositol 3-phosphate (PI3P), phosphatidylinositol 4-phosphate (PI4P) and phosphatidylinositol 5-phosphate (PI5P). PIP-binding enhances membrane association. Myristoylated. Essential for membrane association.

Its subcellular location is the nucleus. It is found in the cytoplasm. The protein resides in the cell membrane. In terms of biological role, necessary for abscisic acid (ABA) binding on the cell membrane and activation of the ABA signaling pathway in granulocytes. The sequence is that of LanC-like protein 2 (Lancl2) from Mus musculus (Mouse).